The primary structure comprises 257 residues: Snake venom serine protease 3 (257 aa).

Residues 1–18 (MVLIRVLANLLILQLSYA) form the signal peptide. Residues 19–24 (QKSSEL) constitute a propeptide that is removed on maturation. Positions 25–248 (VIGGDECNIN…YTDWIQNIIA (224 aa)) constitute a Peptidase S1 domain. 6 disulfides stabilise this stretch: Cys31–Cys163, Cys50–Cys66, Cys98–Cys255, Cys142–Cys209, Cys174–Cys188, and Cys199–Cys224. Residue Asn44 is glycosylated (N-linked (GlcNAc...) asparagine). His65 (charge relay system) is an active-site residue. The N-linked (GlcNAc...) asparagine glycan is linked to Asn103. Residue Asp110 is the Charge relay system of the active site. 2 N-linked (GlcNAc...) asparagine glycosylation sites follow: Asn117 and Asn154. The active-site Charge relay system is the Ser203. A glycan (N-linked (GlcNAc...) asparagine) is linked at Asn250.

The protein belongs to the peptidase S1 family. Snake venom subfamily. In terms of assembly, monomer. In terms of tissue distribution, expressed by the venom gland.

It localises to the secreted. Snake venom serine protease that may act in the hemostasis system of the prey. This is Snake venom serine protease 3 (TLF3) from Protobothrops flavoviridis (Habu).